Reading from the N-terminus, the 159-residue chain is Ribosomal RNA large subunit methyltransferase H (159 aa).

Residues Leu76, Gly108, and 127 to 132 (LSKMTF) contribute to the S-adenosyl-L-methionine site.

The protein belongs to the RNA methyltransferase RlmH family. As to quaternary structure, homodimer.

Its subcellular location is the cytoplasm. It carries out the reaction pseudouridine(1915) in 23S rRNA + S-adenosyl-L-methionine = N(3)-methylpseudouridine(1915) in 23S rRNA + S-adenosyl-L-homocysteine + H(+). Its function is as follows. Specifically methylates the pseudouridine at position 1915 (m3Psi1915) in 23S rRNA. This chain is Ribosomal RNA large subunit methyltransferase H, found in Ureaplasma urealyticum serovar 10 (strain ATCC 33699 / Western).